The chain runs to 134 residues: Large ribosomal subunit protein uL14 (134 aa).

It belongs to the universal ribosomal protein uL14 family. As to quaternary structure, part of the 50S ribosomal subunit. Forms a cluster with proteins L3 and L19. In the 70S ribosome, L14 and L19 interact and together make contacts with the 16S rRNA in bridges B5 and B8.

Functionally, binds to 23S rRNA. Forms part of two intersubunit bridges in the 70S ribosome. The sequence is that of Large ribosomal subunit protein uL14 from Deinococcus deserti (strain DSM 17065 / CIP 109153 / LMG 22923 / VCD115).